Here is a 210-residue protein sequence, read N- to C-terminus: MVAKKRNTLRSKVSARNSQNFGPDVANNGILDESYDIESDPRAFLHQPKETKKEKLLNRQNTFLSNLKGKSTLNDGIAANFDGISKSSIRRRKRKLREELKPRMQDLLTSLEQEKDLRGIIENSSKDMNNDDDIDMDSKIRFVDTKEMNLKKIEPGSVRIKKNQPNIRNQKGAKALAANETARFNQVLTNQDFQKNPFGALREVIKLQKQ.

The interval 1-27 is disordered; that stretch reads MVAKKRNTLRSKVSARNSQNFGPDVAN. Polar residues predominate over residues 10–21; that stretch reads RSKVSARNSQNF.

It belongs to the SLX9 family. In terms of assembly, interacts with the 35S, 23S and 20S pre-rRNAs and with the U3 snoRNA.

The protein resides in the nucleus. It is found in the nucleolus. Its function is as follows. Involved in ribosome biogenesis. Required for normal pre-rRNA processing in internal transcribed spacer 1 (ITS1). May be involved in the movements of the replication forks. The polypeptide is Ribosome biogenesis protein SLX9 (SLX9) (Saccharomyces cerevisiae (strain ATCC 204508 / S288c) (Baker's yeast)).